An 858-amino-acid polypeptide reads, in one-letter code: Tetratricopeptide repeat protein 7A (858 aa).

Position 51 is a phosphoserine (Ser51). TPR repeat units lie at residues 121–157 (CEAM…MENK), 177–210 (ERLP…AQVF), 414–447 (FHLW…RPSD), 497–531 (YSLQ…APSD), 533–565 (QVIL…RKDD), and 566–599 (AHAL…HPEN). Position 182 is a phosphoserine (Ser182). Phosphoserine occurs at positions 647, 678, 679, and 690. At Thr693 the chain carries Phosphothreonine. 3 TPR repeats span residues 745–778 (HSVL…NPDG), 780–812 (RIMH…QSTC), and 813–846 (HEAW…EASS).

As to quaternary structure, component of a phosphatidylinositol 4-kinase (PI4K) complex, composed of PI4KA, EFR3 (EFR3A or EFR3B), TTC7 (TTC7A or TTC7B) and HYCC (HYCC1 or HYCC2). Interacts with PI4KA. Interaction with PI4KA is direct. Interacts with EFR3 (EFR3A or EFR3B), interaction is direct. Interacts with HYCC (HYCC1 or HYCC2), interaction is direct. Association with the PI4K complex is strongly reduced by TMEM150A. Expressed in epithelial cells of the intestine, thymus, and pancreas (at protein level).

It is found in the cytoplasm. It localises to the cell membrane. In terms of biological role, component of a complex required to localize phosphatidylinositol 4-kinase (PI4K) to the plasma membrane. The complex acts as a regulator of phosphatidylinositol 4-phosphate (PtdIns(4)P) synthesis. In the complex, plays a central role in bridging PI4KA to EFR3B and HYCC1, via direct interactions. This chain is Tetratricopeptide repeat protein 7A, found in Homo sapiens (Human).